Reading from the N-terminus, the 465-residue chain is Cysteine--tRNA ligase (465 aa).

C29 is a Zn(2+) binding site. The short motif at P31 to N41 is the 'HIGH' region element. The Zn(2+) site is built by C209, H234, and E238. The 'KMSKS' region signature appears at K266–S270. K269 contacts ATP. S270 carries the post-translational modification Phosphoserine.

The protein belongs to the class-I aminoacyl-tRNA synthetase family. As to quaternary structure, monomer. It depends on Zn(2+) as a cofactor.

It is found in the cytoplasm. It catalyses the reaction tRNA(Cys) + L-cysteine + ATP = L-cysteinyl-tRNA(Cys) + AMP + diphosphate. This Bacillus cereus (strain ATCC 10987 / NRS 248) protein is Cysteine--tRNA ligase.